The following is a 725-amino-acid chain: Ribonuclease Y (725 aa).

Residues 4–24 (VLVILLSLVLLVLVALILAVA) form a helical membrane-spanning segment. Disordered regions lie at residues 62–140 (DGPA…ASDT), 165–195 (VAAT…SVRR), and 300–321 (EQRV…AGRE). Low complexity-rich tracts occupy residues 84–100 (DAPG…PDAG) and 114–137 (AAAP…PADA). The KH domain occupies 415–481 (VVTVLHLPGD…RITLAALVSD (67 aa)). Residues 541-634 (VLAHLIESAH…TQAADQISGG (94 aa)) form the HD domain.

This sequence belongs to the RNase Y family.

The protein resides in the cell membrane. Functionally, endoribonuclease that initiates mRNA decay. The protein is Ribonuclease Y of Frankia alni (strain DSM 45986 / CECT 9034 / ACN14a).